The primary structure comprises 224 residues: Charged multivesicular body protein 4b (224 aa).

The disordered stretch occupies residues 1-23 (MSVFGKLFGAGGGKAGKGGPTPQ). S2 is modified (N-acetylserine). Residues 2 to 153 (SVFGKLFGAG…EISTAISKPV (152 aa)) are intramolecular interaction with C-terminus. An N6-acetyllysine modification is found at K6. A compositionally biased stretch (gly residues) spans 8–19 (FGAGGGKAGKGG). The stretch at 23–183 (QEAIQRLRDT…EELDKNLLEI (161 aa)) forms a coiled coil. K114 bears the N6-acetyllysine mark. The interval 154–224 (GFGEEFDEDE…KELENWAGSM (71 aa)) is intramolecular interaction with N-terminus. S184 and S223 each carry phosphoserine. The segment at 185–224 (GPETVPLPNVPSVALPSKPAKKKEEEDDDMKELENWAGSM) is disordered.

The protein belongs to the SNF7 family. Probable core component of the endosomal sorting required for transport complex III (ESCRT-III). ESCRT-III components are thought to multimerize to form a flat lattice on the perimeter membrane of the endosome. Several assembly forms of ESCRT-III may exist that interact and act sequentially. Interacts with CHMP6 and CHMP4C. Interacts with PDCD6IP; the interaction is direct. Interacts with VPS4A; the interaction is direct. Interacts with VPS4B; the interaction is direct. Interacts with CHMP7. Interacts with CFTR; the interaction requires misfolded CFTR. Interacts with PTPN23. Interacts with CC2D1B. ISGylated. Isgylation weakens its interaction with VPS4A.

It is found in the cytoplasm. The protein resides in the cytosol. Its subcellular location is the late endosome membrane. It localises to the midbody. The protein localises to the nucleus envelope. Probable core component of the endosomal sorting required for transport complex III (ESCRT-III) which is involved in multivesicular bodies (MVBs) formation and sorting of endosomal cargo proteins into MVBs. MVBs contain intraluminal vesicles (ILVs) that are generated by invagination and scission from the limiting membrane of the endosome and mostly are delivered to lysosomes enabling degradation of membrane proteins, such as stimulated growth factor receptors, lysosomal enzymes and lipids. The MVB pathway appears to require the sequential function of ESCRT-O, -I,-II and -III complexes. ESCRT-III proteins mostly dissociate from the invaginating membrane before the ILV is released. The ESCRT machinery also functions in topologically equivalent membrane fission events, such as the terminal stages of cytokinesis. Together with SPAST, the ESCRT-III complex promotes nuclear envelope sealing and mitotic spindle disassembly during late anaphase. Plays a role in the endosomal sorting pathway. ESCRT-III proteins are believed to mediate the necessary vesicle extrusion and/or membrane fission activities, possibly in conjunction with the AAA ATPase VPS4. When overexpressed, membrane-assembled circular arrays of CHMP4B filaments can promote or stabilize negative curvature and outward budding. CHMP4A/B/C are required for the exosomal release of SDCBP, CD63 and syndecan. Majority of the protein exists in a folded closed conformation. This Mus musculus (Mouse) protein is Charged multivesicular body protein 4b (Chmp4b).